A 234-amino-acid polypeptide reads, in one-letter code: Leucyl/phenylalanyl-tRNA--protein transferase (234 aa).

This sequence belongs to the L/F-transferase family.

Its subcellular location is the cytoplasm. It carries out the reaction N-terminal L-lysyl-[protein] + L-leucyl-tRNA(Leu) = N-terminal L-leucyl-L-lysyl-[protein] + tRNA(Leu) + H(+). The enzyme catalyses N-terminal L-arginyl-[protein] + L-leucyl-tRNA(Leu) = N-terminal L-leucyl-L-arginyl-[protein] + tRNA(Leu) + H(+). It catalyses the reaction L-phenylalanyl-tRNA(Phe) + an N-terminal L-alpha-aminoacyl-[protein] = an N-terminal L-phenylalanyl-L-alpha-aminoacyl-[protein] + tRNA(Phe). In terms of biological role, functions in the N-end rule pathway of protein degradation where it conjugates Leu, Phe and, less efficiently, Met from aminoacyl-tRNAs to the N-termini of proteins containing an N-terminal arginine or lysine. This Escherichia coli O45:K1 (strain S88 / ExPEC) protein is Leucyl/phenylalanyl-tRNA--protein transferase.